Consider the following 272-residue polypeptide: 1,4-dihydroxy-2-naphthoyl-CoA synthase (272 aa).

Residues Arg33, 72 to 76, Tyr84, 116 to 120, Thr142, Ser148, Tyr245, and Lys260 each bind substrate; these read SGGDQ and YAIGG. A hydrogencarbonate-binding site is contributed by 141 to 143; sequence QTG. A compositionally biased stretch (basic and acidic residues) spans 253–264; it reads GRDAFKEKRDPD. The segment at 253-272 is disordered; sequence GRDAFKEKRDPDFDQFPKFP.

This sequence belongs to the enoyl-CoA hydratase/isomerase family. MenB subfamily. Hydrogencarbonate is required as a cofactor.

The catalysed reaction is 2-succinylbenzoyl-CoA + H(+) = 1,4-dihydroxy-2-naphthoyl-CoA + H2O. It participates in quinol/quinone metabolism; 1,4-dihydroxy-2-naphthoate biosynthesis; 1,4-dihydroxy-2-naphthoate from chorismate: step 6/7. Its pathway is quinol/quinone metabolism; menaquinone biosynthesis. Converts o-succinylbenzoyl-CoA (OSB-CoA) to 1,4-dihydroxy-2-naphthoyl-CoA (DHNA-CoA). The protein is 1,4-dihydroxy-2-naphthoyl-CoA synthase of Staphylococcus haemolyticus (strain JCSC1435).